Consider the following 364-residue polypeptide: tRNA 2-selenouridine synthase (364 aa).

The Rhodanese domain occupies 14-137; sequence LIADTPIIDV…LRQTAIQATI (124 aa). The active-site S-selanylcysteine intermediate is cysteine 97.

It belongs to the SelU family. As to quaternary structure, monomer.

It carries out the reaction 5-methylaminomethyl-2-thiouridine(34) in tRNA + selenophosphate + (2E)-geranyl diphosphate + H2O + H(+) = 5-methylaminomethyl-2-selenouridine(34) in tRNA + (2E)-thiogeraniol + phosphate + diphosphate. It catalyses the reaction 5-methylaminomethyl-2-thiouridine(34) in tRNA + (2E)-geranyl diphosphate = 5-methylaminomethyl-S-(2E)-geranyl-thiouridine(34) in tRNA + diphosphate. The enzyme catalyses 5-methylaminomethyl-S-(2E)-geranyl-thiouridine(34) in tRNA + selenophosphate + H(+) = 5-methylaminomethyl-2-(Se-phospho)selenouridine(34) in tRNA + (2E)-thiogeraniol. The catalysed reaction is 5-methylaminomethyl-2-(Se-phospho)selenouridine(34) in tRNA + H2O = 5-methylaminomethyl-2-selenouridine(34) in tRNA + phosphate. Involved in the post-transcriptional modification of the uridine at the wobble position (U34) of tRNA(Lys), tRNA(Glu) and tRNA(Gln). Catalyzes the conversion of 2-thiouridine (S2U-RNA) to 2-selenouridine (Se2U-RNA). Acts in a two-step process involving geranylation of 2-thiouridine (S2U) to S-geranyl-2-thiouridine (geS2U) and subsequent selenation of the latter derivative to 2-selenouridine (Se2U) in the tRNA chain. The chain is tRNA 2-selenouridine synthase from Escherichia coli (strain K12 / MC4100 / BW2952).